Here is a 124-residue protein sequence, read N- to C-terminus: Small ribosomal subunit protein uS12 (124 aa).

At Asp89 the chain carries 3-methylthioaspartic acid.

This sequence belongs to the universal ribosomal protein uS12 family. Part of the 30S ribosomal subunit. Contacts proteins S8 and S17. May interact with IF1 in the 30S initiation complex.

With S4 and S5 plays an important role in translational accuracy. Its function is as follows. Interacts with and stabilizes bases of the 16S rRNA that are involved in tRNA selection in the A site and with the mRNA backbone. Located at the interface of the 30S and 50S subunits, it traverses the body of the 30S subunit contacting proteins on the other side and probably holding the rRNA structure together. The combined cluster of proteins S8, S12 and S17 appears to hold together the shoulder and platform of the 30S subunit. In Buchnera aphidicola subsp. Cinara cedri (strain Cc), this protein is Small ribosomal subunit protein uS12.